Here is a 545-residue protein sequence, read N- to C-terminus: Phospholipase B-like 1 (545 aa).

The signal sequence occupies residues 1–35; that stretch reads MSRHSQDERLGLPQPPALLPLLLLLLAVAVPLSQA. N-linked (GlcNAc...) (high mannose) asparagine; alternate glycosylation occurs at Asn68. The N-linked (GlcNAc...) (hybrid) asparagine; alternate glycan is linked to Asn68. Residues 206 to 224 constitute a propeptide, removed in mature form; that stretch reads LSPTKNSSLKFFKRWDMGH. N-linked (GlcNAc...) (high mannose) asparagine; alternate glycosylation is found at Asn305, Asn363, and Asn408. Asn305, Asn363, and Asn408 each carry an N-linked (GlcNAc...) (hybrid) asparagine; alternate glycan. 2 disulfides stabilise this stretch: Cys467–Cys472 and Cys471–Cys486. The N-linked (GlcNAc...) (high mannose) asparagine; alternate glycan is linked to Asn523. Asn523 is a glycosylation site (N-linked (GlcNAc...) (hybrid) asparagine; alternate).

It belongs to the phospholipase B-like family. As to quaternary structure, may form a homodimer, each monomer is composed of a chain A and a chain B. The maturation cleavages that produces chains A and B are required to open the putative substrate binding pocket. Both chains A and B remain associated in the mature protein.

Its subcellular location is the lysosome. Exhibits a weak phospholipase activity, acting on various phospholipids, including phosphatidylcholine, phosphatidylinositol, phosphatidylethanolamine and lysophospholipids. However, in view of the small size of the putative binding pocket, it has been proposed that it may act rather as an amidase or a peptidase. The protein is Phospholipase B-like 1 (PLBD1) of Bos taurus (Bovine).